The primary structure comprises 785 residues: Cation/H(+) antiporter 1 (785 aa).

The next 12 helical transmembrane spans lie at 19-39 (LNTMFIQMACILVFSQFFYLF), 44-64 (GQAGPVAQILAGIVLSLLTII), 79-99 (YYIFFSFLLRTAFVFLIGLEI), 112-132 (IVITLGSLVISGIIWLPFLWF), 143-163 (FLTFYLAFLITLSNTAAPVVI), 179-199 (LAISCGLFIEITNIFIYTIVL), 201-221 (FISGTMTADIFIYSFATGVII), 240-260 (YLSKAETLAFIILILIIALTI), 294-314 (YPIHEFVLPVYFGYIGFRFSV), 323-343 (LVLGMTVALSLLGKLLGVLFA), 352-372 (QYWLFLSTMLSVKGHIGLVLL), and 389-409 (MFVAALVIMTLLSGVITSLLL).

The protein belongs to the monovalent cation:proton antiporter 2 (CPA2) transporter (TC 2.A.37) family. CHX (TC 2.A.37.4) subfamily. In terms of tissue distribution, specifically expressed in pollen.

The protein localises to the membrane. Functionally, may operate as a cation/H(+) antiporter. The protein is Cation/H(+) antiporter 1 (CHX1) of Arabidopsis thaliana (Mouse-ear cress).